An 81-amino-acid chain; its full sequence is U-poneritoxin(01)-Om6a (81 aa).

The N-terminal stretch at 1–21 (MRRSYVLLAFAIVLIISIISA) is a signal peptide. A propeptide spanning residues 22-43 (QVEADASSDAFADAVADAVADP) is cleaved from the precursor. Alanine 79 is subject to Alanine amide.

This sequence belongs to the formicidae venom precursor-01 superfamily. Post-translationally, truncated sequences of this peptide have also been found in the venom. It is possible they have been cleaved in the venom. As to expression, expressed by the venom gland.

The protein resides in the secreted. Functionally, cationic amphipathic alpha-helical peptide with antimicrobial activities against E.coli (MIC=3.1), and S.aureus (MIC=3.1 uM). Also shows histamine-releasing activity (33.6% at 10 uM). Does not have activity against S.cerevisiae. Does not show hemolytic activity, even at 50 uM. This Odontomachus monticola (Trap-jaw ant) protein is U-poneritoxin(01)-Om6a.